A 532-amino-acid polypeptide reads, in one-letter code: uncharacterized protein (532 aa).

5 helical membrane-spanning segments follow: residues Tyr11 to Ile31, Ile51 to Phe71, Leu126 to Trp146, Ile147 to Phe167, and Tyr231 to Ile253. The region spanning Ile315–Ile531 is the ABC transporter domain. Residue Gly349–Ser356 participates in ATP binding.

It is found in the membrane. This is an uncharacterized protein from Acanthamoeba polyphaga mimivirus (APMV).